A 259-amino-acid polypeptide reads, in one-letter code: Probable dihydroorotate dehydrogenase B (NAD(+)), electron transfer subunit (259 aa).

Residues 1–89 form the FAD-binding FR-type domain; it reads MLPLNVTITQ…RGPFGKGFTL (89 aa). Positions 211, 216, 219, and 229 each coordinate [2Fe-2S] cluster.

The protein belongs to the PyrK family. Heterotetramer of 2 PyrK and 2 PyrD type B subunits. [2Fe-2S] cluster is required as a cofactor. Requires FAD as cofactor.

It functions in the pathway pyrimidine metabolism; UMP biosynthesis via de novo pathway; orotate from (S)-dihydroorotate (NAD(+) route): step 1/1. Responsible for channeling the electrons from the oxidation of dihydroorotate from the FMN redox center in the PyrD type B subunit to the ultimate electron acceptor NAD(+). This is Probable dihydroorotate dehydrogenase B (NAD(+)), electron transfer subunit from Methanosarcina acetivorans (strain ATCC 35395 / DSM 2834 / JCM 12185 / C2A).